The primary structure comprises 265 residues: Flap endonuclease Xni (265 aa).

Asp111 serves as a coordination point for Mg(2+). Residues 167–260 (VVPAQLVDFW…NLREIRYPPA (94 aa)) form the 5'-3' exonuclease domain. Residues Leu178, Val189, and Ile192 each contribute to the K(+) site. Residues 191–196 (GIGPKT) are interaction with DNA.

This sequence belongs to the Xni family. Mg(2+) is required as a cofactor. K(+) serves as cofactor.

In terms of biological role, has flap endonuclease activity. During DNA replication, flap endonucleases cleave the 5'-overhanging flap structure that is generated by displacement synthesis when DNA polymerase encounters the 5'-end of a downstream Okazaki fragment. The sequence is that of Flap endonuclease Xni from Aeromonas salmonicida (strain A449).